Consider the following 59-residue polypeptide: Large ribosomal subunit protein bL32 (59 aa).

The interval 1 to 20 (MAVPRNRHSNARKNIRRSHH) is disordered.

Belongs to the bacterial ribosomal protein bL32 family.

The sequence is that of Large ribosomal subunit protein bL32 from Chlamydia trachomatis serovar A (strain ATCC VR-571B / DSM 19440 / HAR-13).